The chain runs to 155 residues: Ribosome maturation factor RimP (155 aa).

It belongs to the RimP family.

It is found in the cytoplasm. Functionally, required for maturation of 30S ribosomal subunits. This Synechococcus sp. (strain CC9605) protein is Ribosome maturation factor RimP.